A 110-amino-acid chain; its full sequence is PTS system oligo-beta-mannoside-specific EIIA component (110 aa).

In terms of domain architecture, PTS EIIA type-3 spans 9 to 107 (LTDEQISFQL…VKEMLDLFKT (99 aa)). H83 serves as the catalytic Tele-phosphohistidine intermediate. H83 carries the phosphohistidine; by HPr modification.

The protein localises to the cytoplasm. In terms of biological role, the phosphoenolpyruvate-dependent sugar phosphotransferase system (sugar PTS), a major carbohydrate active transport system, catalyzes the phosphorylation of incoming sugar substrates concomitantly with their translocation across the cell membrane. The enzyme II GmuABC PTS system is involved in the transport of oligo-glucomannans such as cellobiose or mannobiose. This Bacillus subtilis (strain 168) protein is PTS system oligo-beta-mannoside-specific EIIA component.